A 642-amino-acid chain; its full sequence is Sterol O-acyltransferase 2 (642 aa).

The disordered stretch occupies residues 174–194; the sequence is KSSPDAVDSVGKNDGAAPTTV. Phosphoserine occurs at positions 175 and 176. 5 consecutive transmembrane segments (helical) span residues 215–235, 292–312, 404–424, 442–462, and 485–505; these read FSGLYVAFWMAIAFGAVKALI, TGWIFTSIYEFLFVIFYMYLT, ISAKSFFWFTMFPTLIYQIEY, IFGTIFLMMIDAQILMYPVAM, and LLVDIVPGFIVMYILDFYLIW. The short motif at 523-529 is the FYXDWWN motif element; that stretch reads FYGDWWN. The next 2 helical transmembrane spans lie at 567 to 587 and 622 to 642; these read ATLMTFFLSSVVHELAMYVIF and VIFWLGICMGPSVMCTLYLTF. The active site involves His-579.

Belongs to the membrane-bound acyltransferase family. Sterol o-acyltransferase subfamily.

The protein localises to the endoplasmic reticulum membrane. It catalyses the reaction ergosterol + an acyl-CoA = ergosteryl ester + CoA. The enzyme catalyses zymosterol + an acyl-CoA = zymosterol ester + CoA. Sterol O-acyltransferase that catalyzes the formation of stery esters. This Saccharomyces cerevisiae (strain ATCC 204508 / S288c) (Baker's yeast) protein is Sterol O-acyltransferase 2.